The chain runs to 132 residues: Small ribosomal subunit protein uS8 (132 aa).

It belongs to the universal ribosomal protein uS8 family. In terms of assembly, part of the 30S ribosomal subunit. Contacts proteins S5 and S12.

One of the primary rRNA binding proteins, it binds directly to 16S rRNA central domain where it helps coordinate assembly of the platform of the 30S subunit. This Brucella melitensis biotype 1 (strain ATCC 23456 / CCUG 17765 / NCTC 10094 / 16M) protein is Small ribosomal subunit protein uS8.